The chain runs to 125 residues: MKEQTEVGKLKEGRYVVVEDEPCRIVSIATSKPGKHGAAKSRIDCIGIFDGVKRSIVQPVSAKTYVPIVERKMAQVISIAGTTVQLMDVKDFDMFELNVTEEQVAGLEPGKEIPYISSLGKKKLE.

Lysine 35 carries the hypusine modification.

This sequence belongs to the eIF-5A family.

It is found in the cytoplasm. Functions by promoting the formation of the first peptide bond. The sequence is that of Translation initiation factor 5A (eIF5A) from Methanoculleus marisnigri (strain ATCC 35101 / DSM 1498 / JR1).